The sequence spans 496 residues: L-arabinose isomerase (496 aa).

Glutamate 306, glutamate 331, histidine 348, and histidine 447 together coordinate Mn(2+).

The protein belongs to the arabinose isomerase family. Requires Mn(2+) as cofactor.

The catalysed reaction is beta-L-arabinopyranose = L-ribulose. Its pathway is carbohydrate degradation; L-arabinose degradation via L-ribulose; D-xylulose 5-phosphate from L-arabinose (bacterial route): step 1/3. Functionally, catalyzes the conversion of L-arabinose to L-ribulose. This Geobacillus kaustophilus (strain HTA426) protein is L-arabinose isomerase.